The following is a 61-amino-acid chain: Large ribosomal subunit protein uL30 (61 aa).

The protein belongs to the universal ribosomal protein uL30 family. As to quaternary structure, part of the 50S ribosomal subunit.

The polypeptide is Large ribosomal subunit protein uL30 (Chlorobium phaeobacteroides (strain BS1)).